The sequence spans 2832 residues: Cyclic beta-(1,2)-glucan synthase NdvB (2832 aa).

7 helical membrane-spanning segments follow: residues 411–431 (FAIA…VYAF), 444–464 (IMLL…FNTV), 810–830 (LIPV…EPTP), 831–851 (ALIW…LSLI), 880–900 (QVAL…DAIV), 938–958 (WTAP…DTGL), and 959–979 (PFIG…AWFV). The Glycoamylase-like domain maps to 1299–1506 (LASEARLTSL…NGQLREWFHA (208 aa)).

The protein belongs to the NdvB family.

It is found in the cell inner membrane. It carries out the reaction [(1-&gt;2)-beta-D-glucosyl](n) + UDP-alpha-D-glucose = [(1-&gt;2)-beta-D-glucosyl](n+1) + UDP + H(+). Involved in the biosynthesis of cyclic beta-(1,2)-glucan. It seems that NdvB is involved in three enzymatic activities. First, it may catalyze the transfer of the first glucose from UDP-Glc to an unknown amino acid. In the second enzymatic activity (UDP-Glc:beta-(1,2) oligosaccharide glucosyltransferase), it may be responsible for chain elongation. Finally, in the third activity, it may catalyze glucan cyclization and release from the protein. NdvB is also involved in nodule invasion and in bacteroid development. The polypeptide is Cyclic beta-(1,2)-glucan synthase NdvB (Rhizobium meliloti (strain 1021) (Ensifer meliloti)).